A 513-amino-acid polypeptide reads, in one-letter code: Carotenoid isomerooxygenase (513 aa).

Residues His-184, His-242, His-312, and His-503 each coordinate Fe cation.

Belongs to the carotenoid oxygenase family. Fe(2+) is required as a cofactor.

The catalysed reaction is all-trans-zeaxanthin + O2 = (3R)-11-cis-3-hydroxyretinal + (3R)-all-trans-3-hydroxyretinal. It functions in the pathway cofactor metabolism; retinol metabolism. Catalyzes the oxidative cleavage at the 15,15'-double bond of carotenoids and the simultaneous all-trans to 11-cis isomerization of one cleavage product. Carotenoids like 11-cis retinal can promote visual pigment biogenesis in the dark. Essential for the biosynthesis of the 3-hydroxyretinal chromophore of rhodopsin from zeaxanthin and for proper photoreceptor development. The polypeptide is Carotenoid isomerooxygenase (ninaB) (Galleria mellonella (Greater wax moth)).